Consider the following 1441-residue polypeptide: MGFLTPKKTKKGKDKNESNDNSFDGGSSSYNNNNNNNNQPITYTPTAIRSPNNKTMSQSQTSIPTLSSSPSLNYPSSPPNNNNNNNNGNGNEVISIFNNSNNYNNIKYTHRLSTPPALQPQQQQAIKDLLSSTASTYSSSSPFSKLATTNGGISQPTTPISSPSQPFQSVQPNLIIPTTPTTTTTTPQSVQPIAIQQQQQQQQFPSTIQNTVPILQPLALNTIKPHQQQQQQQNQTQPLQQQQPLPLPNQQQPNQTPLQQQQSQQPNQQQQQQQQQQQQSLQNSRGEGEFENKLKKNLSVWVSPVSNKKNKLNHWQSCSDLELYNKLKIREPEFAQSMSCAISPFHYLKIQYDLESIDQSSGGNSGSGTDSFSDGFKVDLNFDGYTEWYKGMNRKVKNRIHSNGKSHHKASNDAMNNNNNNNNNNNNNNGNNSNNGNINNNGINNHSGEDKSPLKKMVKSLKSGSNSSKKEQQQLHQQLLAAQQQQQQLVHQQQQLAQQQLHQQIQKQIEIIPIKVNDEQKQHLDFLRRHESKSVVPTSPTIKGVQSGAGGGNTGNTDGVNIDNMSLDDDNNNNNNNNNNNNNNNNNNNNNNNNNNNNNNNNNNNNNNNNIAVNTPTTNATIPTNNSTTNNTNNTATPSVINGDSKQQEQPQQSQQQQPQQITPNTLLLSTDSIDLLNTLNKDSNNVDNNNNNNNIDDNNSVSREEMENILKKSQQDSNKDLGSVYGNEDSNSGSPTFQDFQSSAAASNVSGGIDDKSQTGFKKLGEKILSFFRSRKSSDSLNSSNSNIPITNISPGRQSQQQQQQHIQQISQQSQQQIQQQQQQQYVARTQSSSSIVYSSSAQQQQQQQQFQFQQNSVSSQSLQSLNGGNNNNNSNSGSINGGSNSGGGGVSNSTQQLPDQMGLFNIFTQQQQQLIMNGGLGVGGINGLVGTGVIGGDSPPPLSRSQSHASFQGKFAPVIIMEDGSLHLTPRILPFNVRGGSTNRTTPPFLTPNTSQTNLSSLVNNNNNNSSHSNNNNNNNNNTNNKNNNNNTNNSNNNNNNNNNNNINNNNNNNSNKQTANNTTNDFSFDQNTDLRSSTNSLTIGSNSNFSSLKNSLNLENPENNNNPDKNVDNNNFINENRNVEINNEKNENNESNNNDNVKVEIVQFDSINVNSNNKSLKNSFNNNNNENINNNNNENENNNKSVIYKNQQEERPIIHIDDNNLNIESVNGDKNSLRNSRDNNNSSSNNNNNNLKNSNSNNSLRNSNEKRDLNISNNNNNNNNNNNNNNNNNNNNNNNNNNNNNNNENKNKIDIDNNKSLNNSNNSGGGGSKNYRSYSNDYDLQEDIDRMNFNKLQTEIKQIFGHNSGGHRSSGGSNRHKDSIGDKEMDYYSSSDEDDDSMDDSLLSSPDPSPPHIFFFKTIHQPNKQNVKKSFAPLKFNQQNNSNNNDDLGGSILE.

Disordered regions lie at residues 1–95, 150–204, 224–289, 401–477, 529–661, 680–760, 776–810, 849–899, 980–1118, 1161–1185, 1209–1321, 1348–1402, and 1421–1441; these read MGFL…EVIS, NGGI…QQQF, KPHQ…GEGE, HSNG…QLHQ, RHES…QPQQ, LNKD…KSQT, RKSS…HIQQ, QQQF…TQQL, RGGS…DNNN, KSLK…NENN, NIES…YRSY, GHNS…HIFF, and LKFN…SILE. Low complexity predominate over residues 19 to 38; the sequence is NDNSFDGGSSSYNNNNNNNN. The span at 39–56 shows a compositional bias: polar residues; that stretch reads QPITYTPTAIRSPNNKTM. Low complexity-rich tracts occupy residues 57-91, 153-187, 227-283, 416-445, 555-564, and 572-635; these read SQSQ…GNGN, ISQP…TTTP, QQQQ…SLQN, NNNN…GINN, GNTDGVNIDN, and NNNN…TNNT. Over residues 636–645 the composition is skewed to polar residues; that stretch reads ATPSVINGDS. Composition is skewed to low complexity over residues 648-661 and 680-700; these read QEQP…QPQQ and LNKD…DDNN. The span at 703–720 shows a compositional bias: basic and acidic residues; the sequence is SREEMENILKKSQQDSNK. The span at 729 to 751 shows a compositional bias: polar residues; the sequence is EDSNSGSPTFQDFQSSAAASNVS. Composition is skewed to low complexity over residues 780-810 and 849-880; these read DSLN…HIQQ and QQQF…NSGS. The span at 881–892 shows a compositional bias: gly residues; it reads INGGSNSGGGGV. The span at 981–994 shows a compositional bias: polar residues; sequence GGSTNRTTPPFLTP. The span at 995–1067 shows a compositional bias: low complexity; that stretch reads NTSQTNLSSL…NKQTANNTTN (73 aa). Residues 1068–1087 are compositionally biased toward polar residues; sequence DFSFDQNTDLRSSTNSLTIG. A compositionally biased stretch (low complexity) spans 1088–1118; that stretch reads SNSNFSSLKNSLNLENPENNNNPDKNVDNNN. Composition is skewed to low complexity over residues 1225 to 1249 and 1257 to 1291; these read DNNN…SLRN and NISN…NNNE. Residues 1362–1373 show a composition bias toward basic and acidic residues; sequence RHKDSIGDKEMD.

This is an uncharacterized protein from Dictyostelium discoideum (Social amoeba).